The chain runs to 391 residues: Formate-dependent phosphoribosylglycinamide formyltransferase (391 aa).

N(1)-(5-phospho-beta-D-ribosyl)glycinamide-binding positions include 20–21 (EL) and E80. ATP contacts are provided by residues R112, K153, 158 to 163 (SSGKGQ), 193 to 196 (EGFV), and E201. The 190-residue stretch at 117-306 (RLAAETLGLP…EFALHVRAIL (190 aa)) folds into the ATP-grasp domain. Mg(2+) contacts are provided by E265 and E277. Residues D284, K354, and 361-362 (RR) each bind N(1)-(5-phospho-beta-D-ribosyl)glycinamide.

This sequence belongs to the PurK/PurT family. As to quaternary structure, homodimer.

The catalysed reaction is N(1)-(5-phospho-beta-D-ribosyl)glycinamide + formate + ATP = N(2)-formyl-N(1)-(5-phospho-beta-D-ribosyl)glycinamide + ADP + phosphate + H(+). The protein operates within purine metabolism; IMP biosynthesis via de novo pathway; N(2)-formyl-N(1)-(5-phospho-D-ribosyl)glycinamide from N(1)-(5-phospho-D-ribosyl)glycinamide (formate route): step 1/1. In terms of biological role, involved in the de novo purine biosynthesis. Catalyzes the transfer of formate to 5-phospho-ribosyl-glycinamide (GAR), producing 5-phospho-ribosyl-N-formylglycinamide (FGAR). Formate is provided by PurU via hydrolysis of 10-formyl-tetrahydrofolate. The protein is Formate-dependent phosphoribosylglycinamide formyltransferase of Shewanella sp. (strain W3-18-1).